Consider the following 206-residue polypeptide: MIGRLTGNLVVKQAPNLMVDINGVGYDLLAPMSTFYQLPELDAKVVLHTHFAVSETSQQLFGFIDQQDREFFRMLIKVNGVGPKMAVGIMSMETNDIVRCILEDNLNALVKVPGVGKKTAERLIIEMRDKLKSWQVTPSVDATGSLVALDSAAPSQNAIVAEAESALVALGYKPVEASKAVARVTSDEITRSEDLIRLALRNMIPA.

The domain I stretch occupies residues 1–64 (MIGRLTGNLV…ETSQQLFGFI (64 aa)). Residues 65-142 (DQQDREFFRM…SWQVTPSVDA (78 aa)) are domain II. The interval 143 to 154 (TGSLVALDSAAP) is flexible linker. The interval 155 to 206 (SQNAIVAEAESALVALGYKPVEASKAVARVTSDEITRSEDLIRLALRNMIPA) is domain III.

It belongs to the RuvA family. As to quaternary structure, homotetramer. Forms an RuvA(8)-RuvB(12)-Holliday junction (HJ) complex. HJ DNA is sandwiched between 2 RuvA tetramers; dsDNA enters through RuvA and exits via RuvB. An RuvB hexamer assembles on each DNA strand where it exits the tetramer. Each RuvB hexamer is contacted by two RuvA subunits (via domain III) on 2 adjacent RuvB subunits; this complex drives branch migration. In the full resolvosome a probable DNA-RuvA(4)-RuvB(12)-RuvC(2) complex forms which resolves the HJ.

The protein resides in the cytoplasm. Functionally, the RuvA-RuvB-RuvC complex processes Holliday junction (HJ) DNA during genetic recombination and DNA repair, while the RuvA-RuvB complex plays an important role in the rescue of blocked DNA replication forks via replication fork reversal (RFR). RuvA specifically binds to HJ cruciform DNA, conferring on it an open structure. The RuvB hexamer acts as an ATP-dependent pump, pulling dsDNA into and through the RuvAB complex. HJ branch migration allows RuvC to scan DNA until it finds its consensus sequence, where it cleaves and resolves the cruciform DNA. This Teredinibacter turnerae (strain ATCC 39867 / T7901) protein is Holliday junction branch migration complex subunit RuvA.